Consider the following 329-residue polypeptide: CDP-6-deoxy-L-threo-D-glycero-4-hexulose-3-dehydrase reductase (329 aa).

The 92-residue stretch at 2 to 93 (SLNVKLHPSG…ELDVNYYPEL (92 aa)) folds into the 2Fe-2S ferredoxin-type domain. [2Fe-2S] cluster-binding residues include Cys37, Cys42, Cys45, and Cys75. An FAD-binding FR-type domain is found at 98–197 (KKTYPCKLDS…EGPQGTFFVR (100 aa)).

As to quaternary structure, monomer.

It functions in the pathway nucleotide-sugar biosynthesis; CDP-ascarylose biosynthesis. It participates in bacterial outer membrane biogenesis; lipopolysaccharide biosynthesis. Participates in the conversion of CDP-6-deoxy-D-glycero-L-threo-4-hexulose to 3,6-dideoxy-D-glycero-D-glycero-4-hexulose together with CDP-6-deoxy-D-glycero-L-threo-4-hexulose-3-dehydrase (E1) in two consecutive steps. The detailed mechanism of E3 is not yet resolved. The sequence is that of CDP-6-deoxy-L-threo-D-glycero-4-hexulose-3-dehydrase reductase (ascD) from Yersinia pestis.